Here is a 95-residue protein sequence, read N- to C-terminus: Aspartyl/glutamyl-tRNA(Asn/Gln) amidotransferase subunit C (95 aa).

It belongs to the GatC family. In terms of assembly, heterotrimer of A, B and C subunits.

The catalysed reaction is L-glutamyl-tRNA(Gln) + L-glutamine + ATP + H2O = L-glutaminyl-tRNA(Gln) + L-glutamate + ADP + phosphate + H(+). It catalyses the reaction L-aspartyl-tRNA(Asn) + L-glutamine + ATP + H2O = L-asparaginyl-tRNA(Asn) + L-glutamate + ADP + phosphate + 2 H(+). Its function is as follows. Allows the formation of correctly charged Asn-tRNA(Asn) or Gln-tRNA(Gln) through the transamidation of misacylated Asp-tRNA(Asn) or Glu-tRNA(Gln) in organisms which lack either or both of asparaginyl-tRNA or glutaminyl-tRNA synthetases. The reaction takes place in the presence of glutamine and ATP through an activated phospho-Asp-tRNA(Asn) or phospho-Glu-tRNA(Gln). The protein is Aspartyl/glutamyl-tRNA(Asn/Gln) amidotransferase subunit C of Chromobacterium violaceum (strain ATCC 12472 / DSM 30191 / JCM 1249 / CCUG 213 / NBRC 12614 / NCIMB 9131 / NCTC 9757 / MK).